Consider the following 266-residue polypeptide: GTP-binding protein Rhes (266 aa).

GTP is bound at residue 26 to 33 (GASRVGKS). Positions 48-56 (YTPTIEDFH) match the Effector region motif. GTP-binding positions include 73–77 (DTSGN) and 140–143 (NKND). The segment at 189–235 (MAKLPHEMSPALHHKISVQYGDAFHPRPFCMRRTKVAGAYGMVSPFA) is interaction with GNB1, GNB2 and GNB3. Cys-263 carries the post-translational modification Cysteine methyl ester. Cys-263 carries S-farnesyl cysteine lipidation. Positions 264-266 (SIQ) are cleaved as a propeptide — removed in mature form.

Belongs to the small GTPase superfamily. RasD family. As to quaternary structure, monomer (Potential). Interacts with PIK3CA and UBE2I. Interacts with GNB1, GNB2 and GNB3. Post-translationally, farnesylated. Farnesylation is required for membrane targeting. Highly expressed in brain; prominently in the striatum and weakly in kidney, thyroid, lung, heart and testis. Not expressed in liver. Expressed in pancreatic cell lines and in a embryonic stem cell line.

Its subcellular location is the cell membrane. In terms of biological role, GTPase signaling protein that binds to and hydrolyzes GTP. Regulates signaling pathways involving G-proteins-coupled receptor and heterotrimeric proteins such as GNB1, GNB2 and GNB3. May be involved in selected striatal competencies, mainly locomotor activity and motor coordination. The polypeptide is GTP-binding protein Rhes (Rasd2) (Mus musculus (Mouse)).